Consider the following 178-residue polypeptide: ATP-dependent protease subunit HslV (178 aa).

Threonine 8 is a catalytic residue. 3 residues coordinate Na(+): glycine 163, cysteine 166, and threonine 169.

The protein belongs to the peptidase T1B family. HslV subfamily. A double ring-shaped homohexamer of HslV is capped on each side by a ring-shaped HslU homohexamer. The assembly of the HslU/HslV complex is dependent on binding of ATP.

The protein resides in the cytoplasm. The enzyme catalyses ATP-dependent cleavage of peptide bonds with broad specificity.. Allosterically activated by HslU binding. Its function is as follows. Protease subunit of a proteasome-like degradation complex believed to be a general protein degrading machinery. The polypeptide is ATP-dependent protease subunit HslV (Xylella fastidiosa (strain 9a5c)).